A 540-amino-acid polypeptide reads, in one-letter code: Phosphoenolpyruvate carboxykinase (ATP) (540 aa).

Substrate is bound at residue R65. Residue K87 is modified to N6-acetyllysine. Residues Y207 and K213 each coordinate substrate. Residues K213, H232, and 248–256 (GLSGTGKTT) each bind ATP. 2 residues coordinate Mn(2+): K213 and H232. Position 269 (D269) interacts with Mn(2+). ATP-binding positions include E297, R333, 449 to 450 (RI), and T455. Residue R333 coordinates substrate. An N6-acetyllysine modification is found at K523.

It belongs to the phosphoenolpyruvate carboxykinase (ATP) family. Monomer. Mn(2+) serves as cofactor.

The protein resides in the cytoplasm. The catalysed reaction is oxaloacetate + ATP = phosphoenolpyruvate + ADP + CO2. The protein operates within carbohydrate biosynthesis; gluconeogenesis. Its function is as follows. Involved in the gluconeogenesis. Catalyzes the conversion of oxaloacetate (OAA) to phosphoenolpyruvate (PEP) through direct phosphoryl transfer between the nucleoside triphosphate and OAA. The sequence is that of Phosphoenolpyruvate carboxykinase (ATP) from Escherichia coli O45:K1 (strain S88 / ExPEC).